A 326-amino-acid polypeptide reads, in one-letter code: D-amino-acid oxidase (326 aa).

Positions 14, 15, 16, 36, 44, 48, 49, 50, and 157 each coordinate FAD. Y219 and R274 together coordinate D-proline. Positions 219 and 274 each coordinate D-serine. FAD contacts are provided by R274, G299, G300, G302, and T304. D-proline is bound at residue G300. A D-serine-binding site is contributed by G300.

It belongs to the DAMOX/DASOX family. As to quaternary structure, homodimer. FAD is required as a cofactor.

It is found in the cytoplasm. Its subcellular location is the secreted. The protein localises to the cell wall. It carries out the reaction a D-alpha-amino acid + O2 + H2O = a 2-oxocarboxylate + H2O2 + NH4(+). It catalyses the reaction D-phenylalanine + O2 + H2O = 3-phenylpyruvate + H2O2 + NH4(+). The catalysed reaction is D-lysine + O2 + H2O = 6-amino-2-oxohexanoate + H2O2 + NH4(+). The enzyme catalyses D-methionine + O2 + H2O = 4-methylsulfanyl-2-oxobutanoate + H2O2 + NH4(+). It carries out the reaction D-arginine + O2 + H2O = 5-guanidino-2-oxopentanoate + H2O2 + NH4(+). It catalyses the reaction D-ornithine + O2 + H2O = 5-amino-2-oxopentanoate + H2O2 + NH4(+). The catalysed reaction is D-leucine + O2 + H2O = 4-methyl-2-oxopentanoate + H2O2 + NH4(+). The enzyme catalyses D-alanine + O2 + H2O = pyruvate + H2O2 + NH4(+). It carries out the reaction D-valine + O2 + H2O = 3-methyl-2-oxobutanoate + H2O2 + NH4(+). It catalyses the reaction D-histidine + O2 + H2O = 3-(imidazol-5-yl)pyruvate + H2O2 + NH4(+). Its function is as follows. Catalyzes the oxidative deamination of D-amino acids with broad substrate specificity. This is D-amino-acid oxidase from Glutamicibacter protophormiae (Brevibacterium protophormiae).